Reading from the N-terminus, the 118-residue chain is Small ribosomal subunit protein uS12cz/uS12cy (118 aa).

It belongs to the universal ribosomal protein uS12 family. Part of the 30S ribosomal subunit.

The protein resides in the plastid. The protein localises to the chloroplast. Its function is as follows. With S4 and S5 plays an important role in translational accuracy. Located at the interface of the 30S and 50S subunits. In Helianthus annuus (Common sunflower), this protein is Small ribosomal subunit protein uS12cz/uS12cy (rps12-A).